The sequence spans 185 residues: TATA-box-binding protein 2 (185 aa).

2 repeat units span residues 7–84 and 100–178.

The protein belongs to the TBP family.

General factor that plays a role in the activation of archaeal genes transcribed by RNA polymerase. Binds specifically to the TATA box promoter element which lies close to the position of transcription initiation. The polypeptide is TATA-box-binding protein 2 (Methanosarcina acetivorans (strain ATCC 35395 / DSM 2834 / JCM 12185 / C2A)).